A 554-amino-acid polypeptide reads, in one-letter code: Alpha-taxilin (554 aa).

Residues 1 to 66 (MKNQDKKNGP…ARAKAAQPGA (66 aa)) form a disordered region. S71 bears the Phosphoserine mark. The tract at residues 85–166 (YCVDNNQGGP…RRPQEKKKAK (82 aa)) is disordered. A compositionally biased stretch (low complexity) spans 91-103 (QGGPAEEGAQGEP). Positions 143 to 158 (EEIRASDEVGDRDHRR) are enriched in basic and acidic residues. Residues 186-491 (EEKLAALCKK…NKRVQDLTAG (306 aa)) are a coiled coil. The interval 492 to 554 (GITDIGSERR…GPGEPTPATA (63 aa)) is disordered. Phosphoserine is present on residues S515 and S523.

Belongs to the taxilin family. Binds to the C-terminal coiled coil region of syntaxin family members STX1A, STX3A and STX4A, but not when these proteins are complexed with SNAP25, VAMP2 or STXBP1, suggesting that it interacts with syntaxins that do not form the SNARE complex.

In terms of biological role, may be involved in intracellular vesicle traffic and potentially in calcium-dependent exocytosis in neuroendocrine cells. The sequence is that of Alpha-taxilin (Txlna) from Mus musculus (Mouse).